Reading from the N-terminus, the 97-residue chain is MQAVEFCENPQGIRLRIFLQPKASRDQIVGLHDNELKIAITAPPIDGQANAHLLKYLSKLFKVPKSSIVLEKGELQRHKQIFVPEPKLIPKEIEVLG.

It belongs to the UPF0235 family.

The chain is UPF0235 protein HAPS_1504 from Glaesserella parasuis serovar 5 (strain SH0165) (Haemophilus parasuis).